A 437-amino-acid chain; its full sequence is Protein RecA (437 aa).

Gly69 to Thr76 is a binding site for ATP. The interval His343–Gly437 is disordered. Composition is skewed to polar residues over residues Ser350 to Pro371, Gly380 to Gly391, and Leu400 to Pro426.

It belongs to the RecA family.

Its subcellular location is the cytoplasm. Can catalyze the hydrolysis of ATP in the presence of single-stranded DNA, the ATP-dependent uptake of single-stranded DNA by duplex DNA, and the ATP-dependent hybridization of homologous single-stranded DNAs. It interacts with LexA causing its activation and leading to its autocatalytic cleavage. This chain is Protein RecA, found in Tropheryma whipplei (strain Twist) (Whipple's bacillus).